The chain runs to 634 residues: Threonine--tRNA ligase (634 aa).

The 61-residue stretch at 1 to 61 (MINIRFPDGS…NSNCELRLIT (61 aa)) folds into the TGS domain. Residues 241–532 (DHRKIGKVLD…LIEHYAGNLP (292 aa)) are catalytic. Zn(2+)-binding residues include cysteine 332, histidine 383, and histidine 509.

This sequence belongs to the class-II aminoacyl-tRNA synthetase family. Homodimer. The cofactor is Zn(2+).

The protein localises to the cytoplasm. The enzyme catalyses tRNA(Thr) + L-threonine + ATP = L-threonyl-tRNA(Thr) + AMP + diphosphate + H(+). In terms of biological role, catalyzes the attachment of threonine to tRNA(Thr) in a two-step reaction: L-threonine is first activated by ATP to form Thr-AMP and then transferred to the acceptor end of tRNA(Thr). Also edits incorrectly charged L-seryl-tRNA(Thr). The sequence is that of Threonine--tRNA ligase from Francisella tularensis subsp. holarctica (strain OSU18).